Reading from the N-terminus, the 208-residue chain is Interleukin-6 (208 aa).

Positions 1–29 (MNSLFTSAFSPLAVSLGLLLVMTSAFPTP) are cleaved as a signal peptide. An N-linked (GlcNAc...) asparagine glycan is attached at asparagine 38. Residues cysteine 72 and cysteine 78 are joined by a disulfide bond. Serine 81 carries the post-translational modification Phosphoserine. Cysteine 101 and cysteine 111 are joined by a disulfide.

This sequence belongs to the IL-6 superfamily. As to quaternary structure, component of a hexamer of two molecules each of IL6, IL6R and IL6ST; first binds to IL6R to associate with the signaling subunit IL6ST. Interacts with IL6R (via the N-terminal ectodomain); this interaction may be affected by IL6R-binding with SORL1, hence decreasing IL6 cis signaling. Interacts with SORL1 (via the N-terminal ectodomain); this interaction leads to IL6 internalization and lysosomal degradation. May form a trimeric complex with the soluble SORL1 ectodomain and soluble IL6R receptor; this interaction might stabilize circulating IL6, hence promoting IL6 trans signaling.

It localises to the secreted. In terms of biological role, cytokine with a wide variety of biological functions in immunity, tissue regeneration, and metabolism. Binds to IL6R, then the complex associates to the signaling subunit IL6ST/gp130 to trigger the intracellular IL6-signaling pathway. The interaction with the membrane-bound IL6R and IL6ST stimulates 'classic signaling', whereas the binding of IL6 and soluble IL6R to IL6ST stimulates 'trans-signaling'. Alternatively, 'cluster signaling' occurs when membrane-bound IL6:IL6R complexes on transmitter cells activate IL6ST receptors on neighboring receiver cells. IL6 is a potent inducer of the acute phase response. Rapid production of IL6 contributes to host defense during infection and tissue injury, but excessive IL6 synthesis is involved in disease pathology. In the innate immune response, is synthesized by myeloid cells, such as macrophages and dendritic cells, upon recognition of pathogens through toll-like receptors (TLRs) at the site of infection or tissue injury. In the adaptive immune response, is required for the differentiation of B cells into immunoglobulin-secreting cells. Plays a major role in the differentiation of CD4(+) T cell subsets. Essential factor for the development of T follicular helper (Tfh) cells that are required for the induction of germinal-center formation. Required to drive naive CD4(+) T cells to the Th17 lineage. Also required for proliferation of myeloma cells and the survival of plasmablast cells. Its function is as follows. Acts as an essential factor in bone homeostasis and on vessels directly or indirectly by induction of VEGF, resulting in increased angiogenesis activity and vascular permeability. Induces, through 'trans-signaling' and synergistically with IL1B and TNF, the production of VEGF. Involved in metabolic controls, is discharged into the bloodstream after muscle contraction increasing lipolysis and improving insulin resistance. 'Trans-signaling' in central nervous system also regulates energy and glucose homeostasis. Mediates, through GLP-1, crosstalk between insulin-sensitive tissues, intestinal L cells and pancreatic islets to adapt to changes in insulin demand. Also acts as a myokine. Plays a protective role during liver injury, being required for maintenance of tissue regeneration. Also has a pivotal role in iron metabolism by regulating HAMP/hepcidin expression upon inflammation or bacterial infection. Through activation of IL6ST-YAP-NOTCH pathway, induces inflammation-induced epithelial regeneration. The protein is Interleukin-6 (IL6) of Capra hircus (Goat).